The following is a 1507-amino-acid chain: ABC multidrug transporter SNQ2 (1507 aa).

The interval 1 to 73 is disordered; it reads MSSSSEISVA…RSSTAELSPE (73 aa). The segment covering 41 to 55 has biased composition (basic and acidic residues); it reads RSHEDADGDDAHSDN. Asn55 and Asn336 each carry an N-linked (GlcNAc...) asparagine glycan. The ABC transporter 1 domain maps to 157-412; that stretch reads CLPYTIYKAI…FYRMGYECPP (256 aa). 3 consecutive transmembrane segments (helical) span residues 522–542, 556–576, and 605–625; these read AYTVITICSAIIQSLVSGSLY, GGVLYFCLLYYSLMGLANLSF, and FPFRMIGMTCFLIIIYFLSGL. An N-linked (GlcNAc...) asparagine glycan is attached at Asn626. A helical transmembrane segment spans residues 635 to 655; sequence VYLFLTMCSESINALFELIAA. N-linked (GlcNAc...) asparagine glycosylation occurs at Asn659. A run of 2 helical transmembrane segments spans residues 665–685 and 773–793; these read SISGIVMMSISLYSTYMIQLP and FGIMWCFLLGYIALKALITEI. The ABC transporter 2 domain maps to 857-1099; sequence FIWRNVCYTI…LLSYFERNGA (243 aa). Residue Asn878 is glycosylated (N-linked (GlcNAc...) asparagine). 893–900 contacts ATP; that stretch reads GESGAGKT. The next 3 helical transmembrane spans lie at 1193–1213, 1220–1240, and 1270–1290; these read YIMSKMMLMTVGGLYIGFTFY, TGLQNTLFAAFISIILSAPAM, and LITQYLSEIPYHFLFSAIFFV. Asn1311 carries an N-linked (GlcNAc...) asparagine glycan. The next 2 helical transmembrane spans lie at 1314 to 1334 and 1339 to 1359; these read IMFQLYYIGFGLCVLYMAPNL and VILGLCLSFLIAFCGVVQPVS. A glycan (N-linked (GlcNAc...) asparagine) is linked at Asn1428. Residues 1459–1479 traverse the membrane as a helical segment; that stretch reads FGLYWAYIGFNICAMVAIYYI.

It belongs to the ABC transporter superfamily. ABCG family. PDR (TC 3.A.1.205) subfamily.

Its subcellular location is the cell membrane. Its function is as follows. ABC multidrug transporter involved in the response to azoles such as fluconazole, itraconazole, ketoconazole and voriconazole and contributes to the development of PDR1-dependent azole resistance. Plays a role in biofilm tolerance to fluconazole. Also confers resistance to 4-nitroquinoline-N-oxide (4-NQO). The sequence is that of ABC multidrug transporter SNQ2 from Candida glabrata (strain ATCC 2001 / BCRC 20586 / JCM 3761 / NBRC 0622 / NRRL Y-65 / CBS 138) (Yeast).